Here is a 206-residue protein sequence, read N- to C-terminus: LexA repressor (206 aa).

The H-T-H motif DNA-binding region spans 28–48 (RAEIATRLGFKSANAAEEHLK). Residues Ser123 and Lys160 each act as for autocatalytic cleavage activity in the active site.

The protein belongs to the peptidase S24 family. In terms of assembly, homodimer.

The catalysed reaction is Hydrolysis of Ala-|-Gly bond in repressor LexA.. In terms of biological role, represses a number of genes involved in the response to DNA damage (SOS response), including recA and lexA. In the presence of single-stranded DNA, RecA interacts with LexA causing an autocatalytic cleavage which disrupts the DNA-binding part of LexA, leading to derepression of the SOS regulon and eventually DNA repair. This Shewanella sp. (strain MR-7) protein is LexA repressor.